The following is a 533-amino-acid chain: CTP synthase (533 aa).

Residues 1 to 270 (MVHLAKYIVV…GDYIVRRIEL (270 aa)) are amidoligase domain. Ser-16 provides a ligand contact to CTP. Ser-16 serves as a coordination point for UTP. 17 to 22 (SIGKGI) is a binding site for ATP. Tyr-57 is a binding site for L-glutamine. Residue Asp-74 coordinates ATP. Mg(2+) contacts are provided by Asp-74 and Glu-144. CTP-binding positions include 151 to 153 (DIE), 191 to 196 (KTKPTQ), and Lys-227. UTP contacts are provided by residues 191–196 (KTKPTQ) and Lys-227. Positions 303 to 533 (YVELEDSYIS…FLRAALERSR (231 aa)) constitute a Glutamine amidotransferase type-1 domain. Gly-355 serves as a coordination point for L-glutamine. The active-site Nucleophile; for glutamine hydrolysis is Cys-382. L-glutamine-binding positions include 383-386 (LGMQ), Glu-405, and Arg-462. Active-site residues include His-507 and Glu-509.

The protein belongs to the CTP synthase family. Homotetramer.

The catalysed reaction is UTP + L-glutamine + ATP + H2O = CTP + L-glutamate + ADP + phosphate + 2 H(+). The enzyme catalyses L-glutamine + H2O = L-glutamate + NH4(+). It carries out the reaction UTP + NH4(+) + ATP = CTP + ADP + phosphate + 2 H(+). Its pathway is pyrimidine metabolism; CTP biosynthesis via de novo pathway; CTP from UDP: step 2/2. Allosterically activated by GTP, when glutamine is the substrate; GTP has no effect on the reaction when ammonia is the substrate. The allosteric effector GTP functions by stabilizing the protein conformation that binds the tetrahedral intermediate(s) formed during glutamine hydrolysis. Inhibited by the product CTP, via allosteric rather than competitive inhibition. Catalyzes the ATP-dependent amination of UTP to CTP with either L-glutamine or ammonia as the source of nitrogen. Regulates intracellular CTP levels through interactions with the four ribonucleotide triphosphates. The sequence is that of CTP synthase from Methanothermobacter thermautotrophicus (strain ATCC 29096 / DSM 1053 / JCM 10044 / NBRC 100330 / Delta H) (Methanobacterium thermoautotrophicum).